The sequence spans 1039 residues: Integrin alpha-IIb (1039 aa).

The first 31 residues, 1 to 31, serve as a signal peptide directing secretion; the sequence is MARALCPLQALWLLEWVLLLLGPCAAPPAWA. Residues 32-993 are Extracellular-facing; the sequence is LNLDPVQLTF…TQLLRALEER (962 aa). FG-GAP repeat units lie at residues 35–96, 110–173, 187–238, 251–305, 306–371, 373–432, and 435–496; these read DPVQ…GGQC, VGSQ…RRAE, VEND…FSSY, SLSF…DSYY, QRLH…PHAL, APSL…GLRS, and SQVL…VQDS. An N-linked (GlcNAc...) asparagine glycan is attached at Asn-46. 3 disulfides stabilise this stretch: Cys-87–Cys-96, Cys-138–Cys-161, and Cys-177–Cys-198. Glu-274, Asp-276, and Asp-278 together coordinate Ca(2+). Residue Asn-280 is glycosylated (N-linked (GlcNAc...) asparagine). Ca(2+) is bound by residues Thr-281, Glu-283, Asp-328, Asn-330, Asp-332, Arg-334, Asp-336, Asp-396, Asp-398, Asp-400, Tyr-402, Asp-404, Asp-457, Asp-459, Asn-461, Tyr-463, and Asp-465. 2 disulfide bridges follow: Cys-504-Cys-515 and Cys-521-Cys-576. Residue Asn-601 is glycosylated (N-linked (GlcNAc...) asparagine). 4 cysteine pairs are disulfide-bonded: Cys-633/Cys-639, Cys-705/Cys-718, Cys-857/Cys-921, and Cys-911/Cys-916. A glycan (N-linked (GlcNAc...) asparagine) is linked at Asn-711. A glycan (O-linked (GalNAc...) serine; in variant S-874) is linked at Ile-874. O-linked (GalNAc...) serine glycosylation is present at Ser-878. Pyrrolidone carboxylic acid; in light chain form 1 is present on Gln-891. Asn-962 carries an N-linked (GlcNAc...) asparagine glycan. Residues 994-1019 traverse the membrane as a helical segment; it reads AIPIWWVLVGVLGGLLLLTILVLAMW. Over 1020-1039 the chain is Cytoplasmic; it reads KVGFFKRNRPPLEEDDEEGE. The GFFKR motif motif lies at 1022 to 1026; that stretch reads GFFKR.

The protein belongs to the integrin alpha chain family. In terms of assembly, heterodimer of an alpha and a beta subunit. The alpha subunit is composed of a heavy and a light chain linked by a disulfide bond. Alpha-IIb associates with beta-3. Directly interacts with RNF181. Interacts (via C-terminus cytoplasmic tail region) with CIB1; the interaction is direct and calcium-dependent. Interacts (via C-terminus cytoplasmic tail region) with CIB2, CIB3 and CIB4; the interactions are stabilized/increased in a calcium and magnesium-dependent manner. ITGA2B:ITGB3 interacts with PPIA/CYPA; the interaction is ROS and PPIase activity-dependent and is increased in the presence of thrombin. ITGA2B:ITGB3 interacts with SELP (via C-type lectin domain); the interaction mediates cell-cell interaction and adhesion. Cleaved by ELANE; the cleavage promotes activation of platelet fibrinogen receptor integrin alpha-IIb/beta-3. In terms of tissue distribution, isoform 1 and isoform 2 are expressed in platelets and megakaryocytes, but not in reticulocytes. Not detected in Jurkat, nor in U937 cell lines. Isoform 3 is expressed in prostate adenocarcinoma, as well as in several erythroleukemia, prostate adenocarcinoma and melanoma cell lines, including PC-3, DU-145, HEL, WM983A, WM983B and WM35. Not detected in platelets, nor in normal prostate (at protein level).

The protein resides in the membrane. In terms of biological role, integrin alpha-IIb/beta-3 is a receptor for fibronectin, fibrinogen, plasminogen, prothrombin, thrombospondin and vitronectin. It recognizes the sequence R-G-D in a wide array of ligands. It recognizes the sequence H-H-L-G-G-G-A-K-Q-A-G-D-V in fibrinogen gamma chain. Following activation integrin alpha-IIb/beta-3 brings about platelet/platelet interaction through binding of soluble fibrinogen. This step leads to rapid platelet aggregation which physically plugs ruptured endothelial cell surface. This chain is Integrin alpha-IIb (ITGA2B), found in Homo sapiens (Human).